A 282-amino-acid chain; its full sequence is Tyrosine recombinase XerA (282 aa).

Residues 2-79 (EAINEVIEEY…ALRSYFRFEG (78 aa)) enclose the Core-binding (CB) domain. The Tyr recombinase domain maps to 95–271 (SLPKSLTREE…TVEHLRKAQE (177 aa)). Active-site residues include Arg-132, Lys-157, His-223, Arg-226, and His-249. Residue Tyr-258 is the O-(3'-phospho-DNA)-tyrosine intermediate of the active site.

Belongs to the 'phage' integrase family. XerA subfamily.

It localises to the cytoplasm. Its function is as follows. Site-specific tyrosine recombinase, which acts by catalyzing the cutting and rejoining of the recombining DNA molecules. The protein is Tyrosine recombinase XerA of Thermococcus onnurineus (strain NA1).